The primary structure comprises 142 residues: Large ribosomal subunit protein uL11 (142 aa).

Belongs to the universal ribosomal protein uL11 family. As to quaternary structure, part of the ribosomal stalk of the 50S ribosomal subunit. Interacts with L10 and the large rRNA to form the base of the stalk. L10 forms an elongated spine to which L12 dimers bind in a sequential fashion forming a multimeric L10(L12)X complex. Post-translationally, one or more lysine residues are methylated.

In terms of biological role, forms part of the ribosomal stalk which helps the ribosome interact with GTP-bound translation factors. In Desulfitobacterium hafniense (strain DSM 10664 / DCB-2), this protein is Large ribosomal subunit protein uL11.